Consider the following 214-residue polypeptide: Pyridoxine/pyridoxamine 5'-phosphate oxidase (214 aa).

Residues R8–Y11 and K66 contribute to the substrate site. Residues R61–K66, F76–T77, R82, K83, and Q105 contribute to the FMN site. Substrate contacts are provided by Y123, R127, and S131. FMN is bound by residues Q140 to S141 and W184. R190–H192 is a substrate binding site. R194 provides a ligand contact to FMN.

Belongs to the pyridoxamine 5'-phosphate oxidase family. Homodimer. FMN serves as cofactor.

It carries out the reaction pyridoxamine 5'-phosphate + O2 + H2O = pyridoxal 5'-phosphate + H2O2 + NH4(+). The enzyme catalyses pyridoxine 5'-phosphate + O2 = pyridoxal 5'-phosphate + H2O2. It participates in cofactor metabolism; pyridoxal 5'-phosphate salvage; pyridoxal 5'-phosphate from pyridoxamine 5'-phosphate: step 1/1. The protein operates within cofactor metabolism; pyridoxal 5'-phosphate salvage; pyridoxal 5'-phosphate from pyridoxine 5'-phosphate: step 1/1. Functionally, catalyzes the oxidation of either pyridoxine 5'-phosphate (PNP) or pyridoxamine 5'-phosphate (PMP) into pyridoxal 5'-phosphate (PLP). This is Pyridoxine/pyridoxamine 5'-phosphate oxidase from Burkholderia orbicola (strain MC0-3).